Reading from the N-terminus, the 104-residue chain is L-rhamnose mutarotase (104 aa).

Substrate is bound at residue Y18. H22 acts as the Proton donor in catalysis. Substrate is bound by residues Y41 and 76 to 77 (WW).

The protein belongs to the rhamnose mutarotase family. In terms of assembly, homodimer.

The protein resides in the cytoplasm. It catalyses the reaction alpha-L-rhamnose = beta-L-rhamnose. The protein operates within carbohydrate metabolism; L-rhamnose metabolism. Functionally, involved in the anomeric conversion of L-rhamnose. This chain is L-rhamnose mutarotase, found in Shigella flexneri serotype 5b (strain 8401).